We begin with the raw amino-acid sequence, 185 residues long: Ribosome-recycling factor (185 aa).

It belongs to the RRF family.

It is found in the cytoplasm. Responsible for the release of ribosomes from messenger RNA at the termination of protein biosynthesis. May increase the efficiency of translation by recycling ribosomes from one round of translation to another. The sequence is that of Ribosome-recycling factor from Carboxydothermus hydrogenoformans (strain ATCC BAA-161 / DSM 6008 / Z-2901).